Consider the following 457-residue polypeptide: Probable ubiquitin carboxyl-terminal hydrolase 16 (457 aa).

A disordered region spans residues 34 to 97; the sequence is VSSPSVPEGT…DGANDFVDED (64 aa). Residues 45 to 67 show a composition bias toward polar residues; that stretch reads TVLNNPKQSTVSRKSFSAPTSPT. Position 61 is a phosphoserine (S61). At T64 the chain carries Phosphothreonine. Residue S65 is modified to Phosphoserine. Positions 125 to 429 constitute a USP domain; the sequence is PGLVNLGNTC…QAYILQYKRK (305 aa). The Nucleophile role is filled by C134. The active-site Proton acceptor is the H388. A disordered region spans residues 434–457; the sequence is SKHKLNTENTVTKTSNKKRRKISF. Residues 448 to 457 show a composition bias toward basic residues; the sequence is SNKKRRKISF.

This sequence belongs to the peptidase C19 family.

The catalysed reaction is Thiol-dependent hydrolysis of ester, thioester, amide, peptide and isopeptide bonds formed by the C-terminal Gly of ubiquitin (a 76-residue protein attached to proteins as an intracellular targeting signal).. The sequence is that of Probable ubiquitin carboxyl-terminal hydrolase 16 (ubp16) from Schizosaccharomyces pombe (strain 972 / ATCC 24843) (Fission yeast).